The sequence spans 316 residues: Very-long-chain 3-oxooacyl-coA reductase let-767 (316 aa).

Residues 52–80 (ITGA…VSRT) and Asp-106 each bind NADP(+). Position 189 (Ser-189) interacts with substrate. Tyr-202 serves as the catalytic Proton acceptor. Lys-206 is a binding site for NADP(+).

Belongs to the short-chain dehydrogenases/reductases (SDR) family. 17-beta-HSD 3 subfamily.

It carries out the reaction a very-long-chain (3R)-3-hydroxyacyl-CoA + NADP(+) = a very-long-chain 3-oxoacyl-CoA + NADPH + H(+). It participates in lipid metabolism; fatty acid biosynthesis. Its function is as follows. Required for branched chain fatty acid synthesis. Catalyzes the reduction of the 3-ketoacyl-CoA intermediate that is formed in each cycle of fatty acid elongation. Very long-chain fatty acids (VLCFAs) serve as precursors for ceramide and sphingolipids. May also be required for sterol hormone production. The protein is Very-long-chain 3-oxooacyl-coA reductase let-767 of Caenorhabditis briggsae.